A 339-amino-acid chain; its full sequence is Protein FAM76B (339 aa).

Position 2 is an N-acetylalanine (Ala-2). A phosphoserine mark is found at Ser-22 and Ser-148. The interval 144 to 243 (EQRKSLGSSH…INQSADSGGT (100 aa)) is disordered. The span at 148–160 (SLGSSHSNSSSSS) shows a compositional bias: low complexity. Over residues 167-189 (HHSKHHHHHHHHHHRHSSGHHKV) the composition is skewed to basic residues. Ser-193 carries the phosphoserine modification. Position 215 is a phosphothreonine (Thr-215). A compositionally biased stretch (basic and acidic residues) spans 215 to 224 (TPKKKPKLES). Positions 228–243 (NGDSSSINQSADSGGT) are enriched in polar residues. Positions 248–328 (LISQLKEEVM…QVAALSKGKK (81 aa)) form a coiled coil.

It belongs to the FAM76 family. Interacts with HNRNPA2B1 (via C-terminus); the interaction results in retention of HNRNPA2B1 in the nucleus and inhibition of the NF-kappa-B-mediated inflammatory pathway.

Its subcellular location is the nucleus speckle. In terms of biological role, negatively regulates the NF-kappa-B-mediated inflammatory pathway by preventing the translocation of HNRNPA2B1 from the nucleus to the cytoplasm. Inhibits the PI3K/Akt/NF-kappa-B pathway-mediated polarization of M1 macrophages by binding to and stabilizing PIK3CD mRNA, resulting in increased levels of PIK3CD protein and increased levels of phosphorylated downstream target AKT which leads to decreased NF-kappa-B signaling. This is Protein FAM76B (Fam76b) from Mus musculus (Mouse).